The chain runs to 373 residues: Queuine tRNA-ribosyltransferase (373 aa).

The active-site Proton acceptor is the Asp-91. Substrate contacts are provided by residues 91-95 (DSGGF), Asp-145, Gln-187, and Gly-214. Positions 245-251 (GVGKPED) are RNA binding. Catalysis depends on Asp-264, which acts as the Nucleophile. Residues 269–273 (TRNAR) are RNA binding; important for wobble base 34 recognition. Cys-302, Cys-304, Cys-307, and His-333 together coordinate Zn(2+).

It belongs to the queuine tRNA-ribosyltransferase family. In terms of assembly, homodimer. Within each dimer, one monomer is responsible for RNA recognition and catalysis, while the other monomer binds to the replacement base PreQ1. Zn(2+) serves as cofactor.

The catalysed reaction is 7-aminomethyl-7-carbaguanine + guanosine(34) in tRNA = 7-aminomethyl-7-carbaguanosine(34) in tRNA + guanine. Its pathway is tRNA modification; tRNA-queuosine biosynthesis. In terms of biological role, catalyzes the base-exchange of a guanine (G) residue with the queuine precursor 7-aminomethyl-7-deazaguanine (PreQ1) at position 34 (anticodon wobble position) in tRNAs with GU(N) anticodons (tRNA-Asp, -Asn, -His and -Tyr). Catalysis occurs through a double-displacement mechanism. The nucleophile active site attacks the C1' of nucleotide 34 to detach the guanine base from the RNA, forming a covalent enzyme-RNA intermediate. The proton acceptor active site deprotonates the incoming PreQ1, allowing a nucleophilic attack on the C1' of the ribose to form the product. After dissociation, two additional enzymatic reactions on the tRNA convert PreQ1 to queuine (Q), resulting in the hypermodified nucleoside queuosine (7-(((4,5-cis-dihydroxy-2-cyclopenten-1-yl)amino)methyl)-7-deazaguanosine). In Idiomarina loihiensis (strain ATCC BAA-735 / DSM 15497 / L2-TR), this protein is Queuine tRNA-ribosyltransferase.